Reading from the N-terminus, the 153-residue chain is MATLYDVPPEELIEALTETLADEDDIEAPDWAEFTKTGVDRELPPEQEDFWTRRAASLLRKVAVDGPVGVNALRSEYGTSKQGTTRYRVRPHQKTKGSGNIIRTALQQLEDAGYVETSENDGRRVTGDGRSLLDDTAGDLLTELDRPELERYA.

2 disordered regions span residues 77 to 99 (YGTS…KGSG) and 113 to 139 (GYVE…TAGD). Basic and acidic residues predominate over residues 120–133 (NDGRRVTGDGRSLL).

It belongs to the eukaryotic ribosomal protein eS19 family. As to quaternary structure, part of the 30S ribosomal subunit.

May be involved in maturation of the 30S ribosomal subunit. The chain is Small ribosomal subunit protein eS19 from Haloarcula marismortui (strain ATCC 43049 / DSM 3752 / JCM 8966 / VKM B-1809) (Halobacterium marismortui).